Reading from the N-terminus, the 177-residue chain is Small ribosomal subunit protein bS21m (177 aa).

Residues Met-1–Phe-17 constitute a mitochondrion transit peptide.

It belongs to the bacterial ribosomal protein bS21 family. As to quaternary structure, component of the mitochondrial small ribosomal subunit (mt-SSU). Mature yeast 74S mitochondrial ribosomes consist of a small (37S) and a large (54S) subunit. The 37S small subunit contains a 15S ribosomal RNA (15S mt-rRNA) and 34 different proteins. The 54S large subunit contains a 21S rRNA (21S mt-rRNA) and 46 different proteins.

It localises to the mitochondrion. Functionally, component of the mitochondrial ribosome (mitoribosome), a dedicated translation machinery responsible for the synthesis of mitochondrial genome-encoded proteins, including at least some of the essential transmembrane subunits of the mitochondrial respiratory chain. The mitoribosomes are attached to the mitochondrial inner membrane and translation products are cotranslationally integrated into the membrane. The chain is Small ribosomal subunit protein bS21m (MRP21) from Saccharomyces cerevisiae (strain ATCC 204508 / S288c) (Baker's yeast).